The primary structure comprises 50 residues: Protease inhibitor 2 (50 aa).

Residues 2–50 (EDCVGRKACTREWYPVCGSDGVTYSNPCNFSAQQEQCDPNITIAHMGEC) form the Kazal-like domain. 2 disulfides stabilise this stretch: Cys10/Cys29 and Cys18/Cys50. Residues Asn30 and Asn41 are each glycosylated (N-linked (GlcNAc...) asparagine).

In terms of biological role, serine protease inhibitor. Strongly inhibits human neutrophil elastase and trypsin, also inhibits porcine pancreatic elastase and subtilisin A. Does not inhibit chymotrypsin, plasma kallikrein, pancreatic kallikrein, thrombin or papain. The sequence is that of Protease inhibitor 2 from Cenchritis muricatus (Beaded periwinkle).